The chain runs to 154 residues: Prefoldin subunit alpha (154 aa).

Positions 92 to 102 (DNAVESLSTKQ) are enriched in polar residues. The interval 92-154 (DNAVESLSTK…MQDQQPEDNE (63 aa)) is disordered. Over residues 103–114 (DALDNRIESLRD) the composition is skewed to basic and acidic residues. A compositionally biased stretch (low complexity) spans 128 to 148 (QQAQQMQQQMQQQQMQQMQDQ).

Belongs to the prefoldin subunit alpha family. Heterohexamer of two alpha and four beta subunits.

It is found in the cytoplasm. Functionally, molecular chaperone capable of stabilizing a range of proteins. Seems to fulfill an ATP-independent, HSP70-like function in archaeal de novo protein folding. This chain is Prefoldin subunit alpha, found in Haloquadratum walsbyi (strain DSM 16790 / HBSQ001).